The chain runs to 405 residues: Adenosylhomocysteinase (405 aa).

Substrate contacts are provided by Asp-113 and Glu-138. 139 to 141 (TTT) is an NAD(+) binding site. Substrate contacts are provided by Lys-168 and Asp-172. NAD(+) is bound by residues Asn-173, 202-207 (GYGWCG), Glu-225, Asn-260, 281-283 (AGH), and Asn-327.

Belongs to the adenosylhomocysteinase family. NAD(+) is required as a cofactor.

It is found in the cytoplasm. It carries out the reaction S-adenosyl-L-homocysteine + H2O = L-homocysteine + adenosine. It functions in the pathway amino-acid biosynthesis; L-homocysteine biosynthesis; L-homocysteine from S-adenosyl-L-homocysteine: step 1/1. In terms of biological role, may play a key role in the regulation of the intracellular concentration of adenosylhomocysteine. The protein is Adenosylhomocysteinase of Archaeoglobus fulgidus (strain ATCC 49558 / DSM 4304 / JCM 9628 / NBRC 100126 / VC-16).